The chain runs to 616 residues: Dihydroxy-acid dehydratase (616 aa).

Residue Asp-81 coordinates Mg(2+). [2Fe-2S] cluster is bound at residue Cys-122. Residues Asp-123 and Lys-124 each coordinate Mg(2+). Lys-124 is subject to N6-carboxylysine. Cys-195 serves as a coordination point for [2Fe-2S] cluster. Glu-491 is a Mg(2+) binding site. The active-site Proton acceptor is the Ser-517.

The protein belongs to the IlvD/Edd family. In terms of assembly, homodimer. [2Fe-2S] cluster serves as cofactor. It depends on Mg(2+) as a cofactor.

The enzyme catalyses (2R)-2,3-dihydroxy-3-methylbutanoate = 3-methyl-2-oxobutanoate + H2O. The catalysed reaction is (2R,3R)-2,3-dihydroxy-3-methylpentanoate = (S)-3-methyl-2-oxopentanoate + H2O. It functions in the pathway amino-acid biosynthesis; L-isoleucine biosynthesis; L-isoleucine from 2-oxobutanoate: step 3/4. The protein operates within amino-acid biosynthesis; L-valine biosynthesis; L-valine from pyruvate: step 3/4. Functionally, functions in the biosynthesis of branched-chain amino acids. Catalyzes the dehydration of (2R,3R)-2,3-dihydroxy-3-methylpentanoate (2,3-dihydroxy-3-methylvalerate) into 2-oxo-3-methylpentanoate (2-oxo-3-methylvalerate) and of (2R)-2,3-dihydroxy-3-methylbutanoate (2,3-dihydroxyisovalerate) into 2-oxo-3-methylbutanoate (2-oxoisovalerate), the penultimate precursor to L-isoleucine and L-valine, respectively. The protein is Dihydroxy-acid dehydratase of Shigella flexneri.